We begin with the raw amino-acid sequence, 767 residues long: DNA topoisomerase 1 (767 aa).

The segment covering 1 to 23 has biased composition (basic and acidic residues); that stretch reads MSGDHLHNDSQIEADFRLNDSHK. The disordered stretch occupies residues 1 to 200; sequence MSGDHLHNDS…DNKKKKAKKE (200 aa). Serine 2 is subject to N-acetylserine. A phosphoserine mark is found at serine 2 and serine 10. The segment covering 24 to 39 has biased composition (basic residues); it reads HKDKHKDREHRHKEHK. Over residues 40–110 the composition is skewed to basic and acidic residues; it reads KDKDKDREKS…DAKIKKEKEN (71 aa). Serine 59 is modified (phosphoserine). Lysine 103 is covalently cross-linked (Glycyl lysine isopeptide (Lys-Gly) (interchain with G-Cter in SUMO2)). Lysine 105 is covalently cross-linked (Glycyl lysine isopeptide (Lys-Gly) (interchain with G-Cter in SUMO); alternate). Lysine 105 is covalently cross-linked (Glycyl lysine isopeptide (Lys-Gly) (interchain with G-Cter in SUMO2); alternate). Serine 114 carries the phosphoserine modification. A Glycyl lysine isopeptide (Lys-Gly) (interchain with G-Cter in SUMO); alternate cross-link involves residue lysine 119. Lysine 119 participates in a covalent cross-link: Glycyl lysine isopeptide (Lys-Gly) (interchain with G-Cter in SUMO2); alternate. A Glycyl lysine isopeptide (Lys-Gly) (interchain with G-Cter in SUMO1); alternate cross-link involves residue lysine 119. Basic and acidic residues predominate over residues 131 to 168; the sequence is PKEDIKPLKRPRDEDDADYKPKKIKTEDIKKEKKRKLE. Glycyl lysine isopeptide (Lys-Gly) (interchain with G-Cter in SUMO2) cross-links involve residues lysine 136 and lysine 150. Lysine 155 participates in a covalent cross-link: Glycyl lysine isopeptide (Lys-Gly) (interchain with G-Cter in SUMO); alternate. Lysine 155 participates in a covalent cross-link: Glycyl lysine isopeptide (Lys-Gly) (interchain with G-Cter in SUMO2); alternate. Glycyl lysine isopeptide (Lys-Gly) (interchain with G-Cter in SUMO2) cross-links involve residues lysine 160 and lysine 166. Residue lysine 174 forms a Glycyl lysine isopeptide (Lys-Gly) (interchain with G-Cter in SUMO2); alternate linkage. At lysine 174 the chain carries N6-acetyllysine; alternate. Residues 181-200 show a composition bias toward basic and acidic residues; that stretch reads KDKDKKVAEPDNKKKKAKKE. A Glycyl lysine isopeptide (Lys-Gly) (interchain with G-Cter in SUMO2) cross-link involves residue lysine 206. Residue lysine 282 is modified to N6-acetyllysine. Lysine 338 participates in a covalent cross-link: Glycyl lysine isopeptide (Lys-Gly) (interchain with G-Cter in SUMO2). 2 interaction with DNA regions span residues 427 to 428 and 490 to 495; these read KY and RAGNEK. The 334-residue stretch at 434 to 767 folds into the Topo IB-type catalytic domain; the sequence is SSRIKGEKDW…IDMTDEDYEF (334 aa). Phosphoserine; by CK2 is present on serine 508. Residue lysine 551 forms a Glycyl lysine isopeptide (Lys-Gly) (interchain with G-Cter in SUMO2) linkage. Residues 587–589 form an interaction with DNA region; it reads TAK. Residues lysine 644, lysine 702, and lysine 714 each participate in a glycyl lysine isopeptide (Lys-Gly) (interchain with G-Cter in SUMO2) cross-link. Tyrosine 725 serves as the catalytic O-(3'-phospho-DNA)-tyrosine intermediate.

The protein belongs to the type IB topoisomerase family. As to quaternary structure, monomer. Interacts with ERCC6. Interacts with TPRN; TPRN interacts with a number of DNA damage response proteins, is recruited to sites of DNA damage and may play a role in DNA damage repair. Sumoylated. Lys-119 is the main site of sumoylation. Sumoylation plays a role in partitioning TOP1 between nucleoli and nucleoplasm. Levels are dramatically increased on camptothecin (CPT) treatment. Post-translationally, phosphorylation at Ser-508 by CK2 increases binding to supercoiled DNA and sensitivity to camptothecin.

It is found in the nucleus. It localises to the nucleolus. The protein localises to the nucleoplasm. The enzyme catalyses ATP-independent breakage of single-stranded DNA, followed by passage and rejoining.. In terms of biological role, releases the supercoiling and torsional tension of DNA introduced during the DNA replication and transcription by transiently cleaving and rejoining one strand of the DNA duplex. Introduces a single-strand break via transesterification at a target site in duplex DNA. The scissile phosphodiester is attacked by the catalytic tyrosine of the enzyme, resulting in the formation of a DNA-(3'-phosphotyrosyl)-enzyme intermediate and the expulsion of a 5'-OH DNA strand. The free DNA strand then rotates around the intact phosphodiester bond on the opposing strand, thus removing DNA supercoils. Finally, in the religation step, the DNA 5'-OH attacks the covalent intermediate to expel the active-site tyrosine and restore the DNA phosphodiester backbone. Regulates the alternative splicing of tissue factor (F3) pre-mRNA in endothelial cells. Involved in the circadian transcription of the core circadian clock component BMAL1 by altering the chromatin structure around the ROR response elements (ROREs) on the BMAL1 promoter. The chain is DNA topoisomerase 1 (Top1) from Rattus norvegicus (Rat).